The sequence spans 97 residues: MSRACELTGKSVQYGNNVSHANNRTRRRFLPNLCNVTLISETLGQSYRLRISANALRSVEHRGGLDAFLVKSDDKELSQRARLLKRQIAKKQAEAAA.

Belongs to the bacterial ribosomal protein bL28 family.

In Brucella abortus (strain S19), this protein is Large ribosomal subunit protein bL28.